Reading from the N-terminus, the 85-residue chain is Putative transmembrane protein ORF85 (85 aa).

2 helical membrane-spanning segments follow: residues 12-32 (FPPT…KFLS) and 44-64 (LGII…GAGI).

Its subcellular location is the host membrane. In Acidianus convivator (ABV), this protein is Putative transmembrane protein ORF85.